The sequence spans 540 residues: Sesquiterpene synthase 15b (540 aa).

3 residues coordinate Mg(2+): D292, D296, and E445. A DDXXD motif motif is present at residues 292–296 (DDIYD).

It belongs to the terpene synthase family. Tpsa subfamily. Mg(2+) serves as cofactor. Mn(2+) is required as a cofactor.

It catalyses the reaction (2E,6E)-farnesyl diphosphate = germacrene A + diphosphate. It functions in the pathway secondary metabolite biosynthesis; terpenoid biosynthesis. In terms of biological role, sesquiterpene synthase involved in the biosynthesis of volatile compounds. Mediates the conversion of (2E,6E)-farnesyl diphosphate (FPP) into germacrene A. This chain is Sesquiterpene synthase 15b, found in Solanum habrochaites (Wild tomato).